A 491-amino-acid polypeptide reads, in one-letter code: Probable aspartyl aminopeptidase (491 aa).

Zn(2+) is bound at residue H90. H168 provides a ligand contact to substrate. A Zn(2+)-binding site is contributed by D278. Residue E315 coordinates substrate. Zn(2+) contacts are provided by E316 and D361. D361, H364, K389, and Y396 together coordinate substrate. H455 serves as a coordination point for Zn(2+).

The protein belongs to the peptidase M18 family. In terms of assembly, tetrahedron-shaped homododecamer built from six homodimers. The cofactor is Zn(2+).

The protein resides in the cytoplasm. The enzyme catalyses Release of an N-terminal aspartate or glutamate from a peptide, with a preference for aspartate.. In terms of biological role, likely to play an important role in intracellular protein and peptide metabolism. This is Probable aspartyl aminopeptidase from Ricinus communis (Castor bean).